We begin with the raw amino-acid sequence, 122 residues long: MVLQPFKFQNQKKFCRKANPTGRISHDFIYSHIQIFTVRILFTKVNLIDLRLLNTVAFKNGFLHFVQFRDRFVNRIIIHFTLQKGSSLIINRFVSCIRVFVVYCHRKAYQYENEEIQRKRCI.

This is an uncharacterized protein from Saccharomyces cerevisiae (strain ATCC 204508 / S288c) (Baker's yeast).